Here is a 479-residue protein sequence, read N- to C-terminus: Ribosomal RNA small subunit methyltransferase F (479 aa).

S-adenosyl-L-methionine is bound by residues 125–131 (AAAPGSK), Glu149, Asp176, and Asp194. Cys247 serves as the catalytic Nucleophile.

It belongs to the class I-like SAM-binding methyltransferase superfamily. RsmB/NOP family.

The protein localises to the cytoplasm. It catalyses the reaction cytidine(1407) in 16S rRNA + S-adenosyl-L-methionine = 5-methylcytidine(1407) in 16S rRNA + S-adenosyl-L-homocysteine + H(+). Functionally, specifically methylates the cytosine at position 1407 (m5C1407) of 16S rRNA. The chain is Ribosomal RNA small subunit methyltransferase F from Salmonella newport (strain SL254).